Here is a 64-residue protein sequence, read N- to C-terminus: MRCVPVFVILLLLIASAPSVDARLKTKDDMPLPSSHANIKRTLQIHRNKRCCPGWELCCEWDEW.

Residues 1–19 (MRCVPVFVILLLLIASAPS) form the signal peptide. The propeptide occupies 20–48 (VDARLKTKDDMPLPSSHANIKRTLQIHRN). A 4-carboxyglutamate modification is found at E60.

It belongs to the conotoxin T superfamily. Contains 2 disulfide bonds that can be either 'C1-C3, C2-C4' or 'C1-C4, C2-C3', since these disulfide connectivities have been observed for conotoxins with cysteine framework V (for examples, see AC P0DQQ7 and AC P81755). In terms of tissue distribution, expressed by the venom duct.

It is found in the secreted. This Conus marmoreus (Marble cone) protein is Conotoxin mr5.1a.